The sequence spans 805 residues: Sucrose synthase (805 aa).

A GT-B glycosyltransferase region spans residues 275–752 (MVFNVVILSP…GLQRIEEKYT (478 aa)).

This sequence belongs to the glycosyltransferase 1 family. Plant sucrose synthase subfamily.

The catalysed reaction is an NDP-alpha-D-glucose + D-fructose = a ribonucleoside 5'-diphosphate + sucrose + H(+). Sucrose-cleaving enzyme that provides UDP-glucose and fructose for various metabolic pathways. The polypeptide is Sucrose synthase (Medicago sativa (Alfalfa)).